The chain runs to 362 residues: S-adenosylmethionine:tRNA ribosyltransferase-isomerase (362 aa).

The protein belongs to the QueA family. Monomer.

The protein localises to the cytoplasm. It catalyses the reaction 7-aminomethyl-7-carbaguanosine(34) in tRNA + S-adenosyl-L-methionine = epoxyqueuosine(34) in tRNA + adenine + L-methionine + 2 H(+). Its pathway is tRNA modification; tRNA-queuosine biosynthesis. Functionally, transfers and isomerizes the ribose moiety from AdoMet to the 7-aminomethyl group of 7-deazaguanine (preQ1-tRNA) to give epoxyqueuosine (oQ-tRNA). This chain is S-adenosylmethionine:tRNA ribosyltransferase-isomerase, found in Deinococcus radiodurans (strain ATCC 13939 / DSM 20539 / JCM 16871 / CCUG 27074 / LMG 4051 / NBRC 15346 / NCIMB 9279 / VKM B-1422 / R1).